The primary structure comprises 148 residues: Putative nickel-responsive regulator (148 aa).

The Ni(2+) site is built by His-88, His-99, His-101, and Cys-107.

The protein belongs to the transcriptional regulatory CopG/NikR family. Ni(2+) serves as cofactor.

Transcriptional regulator. The protein is Putative nickel-responsive regulator of Helicobacter pylori (strain Shi470).